The sequence spans 234 residues: Leucyl/phenylalanyl-tRNA--protein transferase (234 aa).

The protein belongs to the L/F-transferase family.

It is found in the cytoplasm. The catalysed reaction is N-terminal L-lysyl-[protein] + L-leucyl-tRNA(Leu) = N-terminal L-leucyl-L-lysyl-[protein] + tRNA(Leu) + H(+). It carries out the reaction N-terminal L-arginyl-[protein] + L-leucyl-tRNA(Leu) = N-terminal L-leucyl-L-arginyl-[protein] + tRNA(Leu) + H(+). The enzyme catalyses L-phenylalanyl-tRNA(Phe) + an N-terminal L-alpha-aminoacyl-[protein] = an N-terminal L-phenylalanyl-L-alpha-aminoacyl-[protein] + tRNA(Phe). Its function is as follows. Functions in the N-end rule pathway of protein degradation where it conjugates Leu, Phe and, less efficiently, Met from aminoacyl-tRNAs to the N-termini of proteins containing an N-terminal arginine or lysine. This chain is Leucyl/phenylalanyl-tRNA--protein transferase, found in Syntrophobacter fumaroxidans (strain DSM 10017 / MPOB).